The primary structure comprises 903 residues: DNA gyrase subunit A (903 aa).

In terms of domain architecture, Topo IIA-type catalytic spans 36-499; the sequence is LPDARDGFKP…AIDDSDDEDL (464 aa). Catalysis depends on Y124, which acts as the O-(5'-phospho-DNA)-tyrosine intermediate. A GyrA-box motif is present at residues 526-532; it reads QNRGGKG. Basic and acidic residues predominate over residues 881–895; that stretch reads VDDDSVVKDDAEKQE. The interval 881 to 903 is disordered; sequence VDDDSVVKDDAEKQEIGPTETEE.

This sequence belongs to the type II topoisomerase GyrA/ParC subunit family. Heterotetramer, composed of two GyrA and two GyrB chains. In the heterotetramer, GyrA contains the active site tyrosine that forms a transient covalent intermediate with DNA, while GyrB binds cofactors and catalyzes ATP hydrolysis.

The protein localises to the cytoplasm. It carries out the reaction ATP-dependent breakage, passage and rejoining of double-stranded DNA.. A type II topoisomerase that negatively supercoils closed circular double-stranded (ds) DNA in an ATP-dependent manner to modulate DNA topology and maintain chromosomes in an underwound state. Negative supercoiling favors strand separation, and DNA replication, transcription, recombination and repair, all of which involve strand separation. Also able to catalyze the interconversion of other topological isomers of dsDNA rings, including catenanes and knotted rings. Type II topoisomerases break and join 2 DNA strands simultaneously in an ATP-dependent manner. In Fibrobacter succinogenes (strain ATCC 19169 / S85), this protein is DNA gyrase subunit A.